A 549-amino-acid chain; its full sequence is Protein X92 (549 aa).

This chain is Protein X92, found in Trypanosoma brucei brucei.